The following is a 206-amino-acid chain: Protein phosphatase inhibitor 2 (206 aa).

Positions 1-36 (MAASTASHRPIKGILKNKTSAASPPVVPSAEQPRPI) are disordered. A2 is modified (N-acetylalanine). A required for binding PPP1CC region spans residues 12–17 (KGILKN). The segment at 44 to 56 (KSQKWDEMNILAT) is required for binding the 'RVXF' binding groove of PPP1CC. Position 45 is a phosphoserine; by ATM (S45). At T74 the chain carries Phosphothreonine. The disordered stretch occupies residues 75 to 143 (PYHNMIGDDE…EREKKRQFEM (69 aa)). The span at 81–92 (GDDEDAYSDSEG) shows a compositional bias: acidic residues. A phosphoserine mark is found at S88 and S90. Residues T97 and T117 each carry the phosphothreonine modification. Positions 111–121 (SEPKYRTREQE) are enriched in basic and acidic residues. 3 positions are modified to phosphoserine: S122, S123, and S131. The segment covering 122-131 (SSGEEDNDLS) has biased composition (acidic residues). Basic and acidic residues predominate over residues 132-143 (PEEREKKRQFEM). Positions 148–151 (HYNE) are required for binding PPP1CC catalytic center, displacing metal ions and inhibition of PPP1CC catalytic activity. The segment at 164-206 (KDLHDDDEDEEMAETADGDSMNVEESSQGSTTSDHLQHKSQSS) is disordered. Over residues 168–180 (DDDEDEEMAETAD) the composition is skewed to acidic residues. Residues 186-206 (VEESSQGSTTSDHLQHKSQSS) show a composition bias toward polar residues.

The protein belongs to the protein phosphatase inhibitor 2 family. Heterodimer with PP1. Phosphorylation on Ser-45 by ATM activates PP1 by dissociating the PP1-PPP1R2 complex. Phosphorylation on Thr-74 by GSK3 activates PP1 by dissociating the PP1-PPP1R2 complex.

Inhibitor of protein-phosphatase 1. This is Protein phosphatase inhibitor 2 (Ppp1r2) from Mus musculus (Mouse).